Consider the following 453-residue polypeptide: Crh-like protein CRH11 (453 aa).

The signal sequence occupies residues methionine 1–alanine 21. Cysteine 24 and cysteine 32 are disulfide-bonded. Residues lysine 28–glutamine 227 form the GH16 domain. Glutamate 119 (nucleophile) is an active-site residue. Glutamate 123 (proton donor) is an active-site residue. Positions 123, 204, and 215 each coordinate chitin. Disordered stretches follow at residues leucine 281 to serine 343, lysine 362 to alanine 397, and glycine 410 to asparagine 430. Low complexity-rich tracts occupy residues serine 286–serine 343, threonine 363–alanine 397, and alanine 412–serine 425. Asparagine 290 carries an N-linked (GlcNAc...) asparagine glycan. Asparagine 430 carries GPI-anchor amidated asparagine lipidation. Positions glycine 431 to valine 453 are cleaved as a propeptide — removed in mature form.

This sequence belongs to the glycosyl hydrolase 16 family. CRH1 subfamily. The GPI-anchor is attached to the protein in the endoplasmic reticulum and serves to target the protein to the cell surface. There, the glucosamine-inositol phospholipid moiety is cleaved off and the GPI-modified mannoprotein is covalently attached via its lipidless GPI glycan remnant to the 1,6-beta-glucan of the outer cell wall layer.

It localises to the secreted. The protein resides in the cell wall. Its subcellular location is the membrane. The catalysed reaction is Random endo-hydrolysis of N-acetyl-beta-D-glucosaminide (1-&gt;4)-beta-linkages in chitin and chitodextrins.. Functionally, dual chitinase/transglycosylase that plays a role in cell wall architecture. Chitinase and transglycosylase activities are coupled. Required for the polysaccharide cross-linking at the septa and the cell wall. More specifically, transfers chitin to 1,6-beta-glucan in the cell wall. Plays an important role in fungal pathogenesis via its functions in cell wall assembly and regeneration, filamentation, and adherence to host cells. This is Crh-like protein CRH11 (CRH11) from Candida albicans (strain SC5314 / ATCC MYA-2876) (Yeast).